Reading from the N-terminus, the 129-residue chain is Glycine cleavage system H protein (129 aa).

Residues 24–106 form the Lipoyl-binding domain; the sequence is TVVVGVTSYA…YGDGWLIKVR (83 aa). Residue Lys65 is modified to N6-lipoyllysine.

It belongs to the GcvH family. As to quaternary structure, the glycine cleavage system is composed of four proteins: P, T, L and H. The cofactor is (R)-lipoate.

The glycine cleavage system catalyzes the degradation of glycine. The H protein shuttles the methylamine group of glycine from the P protein to the T protein. In Gloeobacter violaceus (strain ATCC 29082 / PCC 7421), this protein is Glycine cleavage system H protein.